The sequence spans 203 residues: Probable metallo-hydrolase MJ0296 (203 aa).

7 residues coordinate Zn(2+): histidine 86, histidine 88, aspartate 90, histidine 91, histidine 135, aspartate 152, and histidine 193.

It belongs to the metallo-beta-lactamase superfamily. Zn(2+) serves as cofactor.

In Methanocaldococcus jannaschii (strain ATCC 43067 / DSM 2661 / JAL-1 / JCM 10045 / NBRC 100440) (Methanococcus jannaschii), this protein is Probable metallo-hydrolase MJ0296.